Here is a 549-residue protein sequence, read N- to C-terminus: Solute carrier family 22 member 6 (549 aa).

The Cytoplasmic segment spans residues 1–23 (MAFNDLLLQLGGVGRFQKIQVTL). Residues 24–44 (VILPLILLASHNTLQNFTAAI) traverse the membrane as a helical segment. The Extracellular portion of the chain corresponds to 45 to 135 (PTHHCRPPAD…LVCSHRALRQ (91 aa)). N-linked (GlcNAc...) asparagine glycans are attached at residues Asn-56, Asn-92, and Asn-113. The helical transmembrane segment at 136–156 (LAQSLYMMGVLLGAMTFGCLA) threads the bilayer. The Cytoplasmic portion of the chain corresponds to 157 to 164 (DRLGRRKV). Residues 165-185 (LIFNYLQTAVSGTCAAFAPNF) form a helical membrane-spanning segment. Residues 186–195 (PAYCAFRFLS) lie on the Extracellular side of the membrane. Residues 196–216 (GMSTAGVVLNCMTLNVEWMPI) form a helical membrane-spanning segment. At 217–224 (HTRAYVGT) the chain is on the cytoplasmic side. A helical transmembrane segment spans residues 225–245 (LTGYVYSLGQFLLAGMAYAVP). Residues 246–248 (HWR) are Extracellular-facing. The helical transmembrane segment at 249–269 (YLQLLVSAPFFAFFIYSWFFI) threads the bilayer. The Cytoplasmic portion of the chain corresponds to 270 to 337 (ESARWYASSG…ELIRCPALRR (68 aa)). The chain crosses the membrane as a helical span at residues 338 to 358 (LFLCLSMLWFATSFAYYGLVM). Residues 359–368 (DLQGFGVSIY) lie on the Extracellular side of the membrane. The chain crosses the membrane as a helical span at residues 369–389 (LIQVIFGAVDLPAKLVSFLVI). Residues 390–395 (NNVGRR) lie on the Cytoplasmic side of the membrane. A helical transmembrane segment spans residues 396–416 (PAQMASLLLAGICILINGVVP). The Extracellular portion of the chain corresponds to 417–425 (KDKSIVRTS). A helical membrane pass occupies residues 426–446 (LAVLGKGCLASSFNCIFLYTG). Residues 447–456 (EVYPTMIRQT) are Cytoplasmic-facing. The helical transmembrane segment at 457 to 477 (GLGMGSTLARVGSIVSPLVSM) threads the bilayer. The Extracellular portion of the chain corresponds to 478–484 (TAELYPS). A helical transmembrane segment spans residues 485-505 (VPLFIYGAVPVAASAAIALLP). Residues 506–549 (ETLGQPLPDTVQDVENRRRGKTRKQQEELQKQMVPLQASAQVKN) lie on the Cytoplasmic side of the membrane. Residues 521-549 (NRRRGKTRKQQEELQKQMVPLQASAQVKN) are disordered.

This sequence belongs to the major facilitator (TC 2.A.1) superfamily. Organic cation transporter (TC 2.A.1.19) family. Post-translationally, glycosylated. Glycosylation is necessary for proper targeting of the transporter to the plasma membrane.

It localises to the basolateral cell membrane. The protein localises to the basal cell membrane. The catalysed reaction is (6R)-L-erythro-5,6,7,8-tetrahydrobiopterin(out) + a dicarboxylate(in) = (6R)-L-erythro-5,6,7,8-tetrahydrobiopterin(in) + a dicarboxylate(out). It catalyses the reaction L-erythro-7,8-dihydrobiopterin(out) + a dicarboxylate(in) = L-erythro-7,8-dihydrobiopterin(in) + a dicarboxylate(out). It carries out the reaction L-sepiapterin(out) + a dicarboxylate(in) = L-sepiapterin(in) + a dicarboxylate(out). The enzyme catalyses prostaglandin F2alpha(out) + a dicarboxylate(in) = prostaglandin F2alpha(in) + a dicarboxylate(out). The catalysed reaction is prostaglandin E2(out) + a dicarboxylate(in) = prostaglandin E2(in) + a dicarboxylate(out). It catalyses the reaction 3',5'-cyclic AMP(out) + a dicarboxylate(in) = 3',5'-cyclic AMP(in) + a dicarboxylate(out). It carries out the reaction 3',5'-cyclic GMP(out) + a dicarboxylate(in) = 3',5'-cyclic GMP(in) + a dicarboxylate(out). The enzyme catalyses urate(out) + a dicarboxylate(in) = urate(in) + a dicarboxylate(out). The catalysed reaction is kynurenate(out) + glutarate(in) = kynurenate(in) + glutarate(out). It catalyses the reaction (indol-3-yl)acetate(out) + a dicarboxylate(in) = (indol-3-yl)acetate(in) + a dicarboxylate(out). It carries out the reaction indoxyl sulfate(out) + a dicarboxylate(in) = indoxyl sulfate(in) + a dicarboxylate(out). The enzyme catalyses N-benzoylglycine(out) + a dicarboxylate(in) = N-benzoylglycine(in) + a dicarboxylate(out). The catalysed reaction is 3-carboxy-4-methyl-5-propyl-2-furanpropanoate(out) + a dicarboxylate(in) = 3-carboxy-4-methyl-5-propyl-2-furanpropanoate(in) + a dicarboxylate(out). In terms of biological role, secondary active transporter that functions as a Na(+)-independent organic anion (OA)/dicarboxylate antiporter where the uptake of one molecule of OA into the cell is coupled with an efflux of one molecule of intracellular dicarboxylate such as 2-oxoglutarate or glutarate. Mediates the uptake of OA across the basolateral side of proximal tubule epithelial cells, thereby contributing to the renal elimination of endogenous OA from the systemic circulation into the urine. Functions as a biopterin transporters involved in the uptake and the secretion of coenzymes tetrahydrobiopterin (BH4), dihydrobiopterin (BH2) and sepiapterin to urine, thereby determining baseline levels of blood biopterins. Transports prostaglandin E2 (PGE2) and prostaglandin F2-alpha (PGF2-alpha) and may contribute to their renal excretion. Also mediates the uptake of cyclic nucleotides such as cAMP and cGMP. Involved in the transport of neuroactive tryptophan metabolites kynurenate (KYNA) and xanthurenate (XA) and may contribute to their secretion from the brain. May transport glutamate. Also involved in the disposition of uremic toxins and potentially toxic xenobiotics by the renal organic anion secretory pathway, helping reduce their undesired toxicological effects on the body. Uremic toxins include the indoxyl sulfate (IS), hippurate/N-benzoylglycine (HA), indole acetate (IA), 3-carboxy-4- methyl-5-propyl-2-furanpropionate (CMPF) and urate. Xenobiotics include the mycotoxin ochratoxin (OTA). May also contribute to the transport of organic compounds in testes across the blood-testis-barrier. This is Solute carrier family 22 member 6 from Bos taurus (Bovine).